The following is a 481-amino-acid chain: Guanine nucleotide exchange factor C9orf72 homolog (481 aa).

The 172-residue stretch at 23–194 (SPLLAATFAY…ELLASMRSHS (172 aa)) folds into the uDENN C9ORF72-type domain. The 144-residue stretch at 200 to 343 (DIADTVLNDD…SELTAFWRAT (144 aa)) folds into the cDENN C9ORF72-type domain. One can recognise a dDENN C9ORF72-type domain in the interval 370 to 464 (VLHRDTLVKA…IKPGLHSFIF (95 aa)). The required for the homodimerization of the C9orf72-SMCR8 complex stretch occupies residues 461-481 (SFIFGRPFYTSVQERDVLMTF).

In terms of assembly, component of the C9orf72-SMCR8 complex, at least composed of C9orf72, SMCR8 and WDR41. The complex is formed of two protomers, each individually consisting of one molecule each of C9orf72, SMCR8 and WDR41. The protomers homodimerize via an interaction between C9orf72 (via C-terminus) and SMCR8 (via N-terminus). Within each protomer SMCR8 (via DENN domain) acts as a bridging protein between WDR41 (via C-terminus and N-terminus) and C9orf72 (via C-terminus). The C9orf72-SMCR8 complex associates with the ULK1/ATG1 kinase complex. Interacts with ULK1/ATG1 kinase complex members ULK1, ATG13 and RB1CC1. Interacts with SMCR8; the interaction is direct. Interacts with HNRNPA1, HNRNPA2B1 and UBQLN2. Interacts with small Rab GTPase RAB1A; the interaction mediates recruitment of RAB1A to the ULK1/ATG1 kinase complex. Also interacts with small Rab GTPase RAB7A. Interacts with cofilin. Interacts with GTP-binding proteins ARF1 and ARF6. Interacts with the DLG4/PSD-95. Interacts with CARM1 (via PH domain-like fold). Interacts with RAB39A and RAB39B (in GDP-bound forms); functions as GEF for RAB39A and RAB39B.

The protein resides in the nucleus. Its subcellular location is the cytoplasm. It is found in the P-body. It localises to the stress granule. The protein localises to the endosome. The protein resides in the lysosome. Its subcellular location is the cytoplasmic vesicle. It is found in the autophagosome. It localises to the autolysosome. The protein localises to the secreted. The protein resides in the cell projection. Its subcellular location is the axon. It is found in the growth cone. It localises to the perikaryon. Its function is as follows. Acts as a guanine-nucleotide releasing factor (GEF) for Rab GTPases by promoting the conversion of inactive RAB-GDP to the active form RAB-GTP. Acts as a GEF for RAB39A which enables HOPS-mediated autophagosome-lysosome membrane tethering and fusion in mammalian autophagy. Component of the C9orf72-SMCR8 complex where both subunits display GEF activity and that regulates autophagy. As part of the C9orf72-SMCR8-WDR41 (CSW) complex, functions as GEF for RAB8A and RAB39B, thereby promoting autophagosome maturation. As part of the C9orf72-SMCR8 complex, also functions as GTPase activating protein (GAP) for RAB8A and RAB11A in vitro. The C9orf72-SMCR8 complex also acts as a regulator of autophagy initiation by interacting with the ULK1/ATG1 kinase complex and modulating its protein kinase activity. Promotes initiation of autophagy by regulating the RAB1A-dependent trafficking of the ULK1/ATG1 kinase complex to the phagophore which leads to autophagosome formation. Acts as a regulator of mTORC1 signaling by promoting phosphorylation of mTORC1 substrates. Plays a role in endosomal trafficking. May be involved in regulating the maturation of phagosomes to lysosomes. Promotes the lysosomal localization and lysosome-mediated degradation of CARM1 which leads to inhibition of starvation-induced lipid metabolism. Regulates actin dynamics in motor neurons by inhibiting the GTP-binding activity of ARF6, leading to ARF6 inactivation. This reduces the activity of the LIMK1 and LIMK2 kinases which are responsible for phosphorylation and inactivation of cofilin, leading to CFL1/cofilin activation. Positively regulates axon extension and axon growth cone size in spinal motor neurons. Required for SMCR8 protein expression and localization at pre- and post-synaptic compartments in the forebrain, also regulates protein abundance of RAB3A and GRIA1/GLUR1 in post-synaptic compartments in the forebrain and hippocampus. Plays a role within the hematopoietic system in restricting inflammation and the development of autoimmunity. The polypeptide is Guanine nucleotide exchange factor C9orf72 homolog (Rattus norvegicus (Rat)).